The following is a 217-amino-acid chain: ITG-like peptide (217 aa).

A signal peptide spans 1-21 (MHRTMAVTAVLVLSAAGAAHA). Positions 22-208 (WGGLFNRFSS…REFVQHTAGE (187 aa)) are excised as a propeptide.

ITG-like peptide: Expressed in corpora cardiaca (CC), corpora allata (CA), antennal lobe (AL) and gnathal ganglion (GNG) (at protein level). Expression in AL detected in all animals, expression in GNG detected in most animals and in CA and CC detected in few animals (at protein level).

The protein resides in the secreted. The polypeptide is ITG-like peptide (Agrotis ipsilon (Black cutworm moth)).